Here is a 2439-residue protein sequence, read N- to C-terminus: Mucin-6 (2439 aa).

Positions 1–22 are cleaved as a signal peptide; it reads MVQRWLLLSCCGALLSAGLANT. Positions 43 to 214 constitute a VWFD 1 domain; the sequence is GQCSTWGAGH…KLDDPGEICT (172 aa). 2 disulfide bridges follow: Cys-45–Cys-176 and Cys-67–Cys-213. N-linked (GlcNAc...) asparagine glycosylation occurs at Asn-268. Positions 302–357 constitute a TIL domain; it reads CPANQVYQECGSACVKTCSNPQHSCSSSCTFGCFCPEGTVLNDLSNNHTCVPVTQC. The VWFD 2 domain maps to 395–579; that stretch reads GHCSLEGGSF…ALERETDPCS (185 aa). 2 disulfides stabilise this stretch: Cys-397/Cys-533 and Cys-419/Cys-578. N-linked (GlcNAc...) asparagine glycosylation is found at Asn-486 and Asn-659. The 173-residue stretch at 866–1038 folds into the VWFD 3 domain; that stretch reads STCTLYGEGH…NSWKESPLCG (173 aa). Disulfide bonds link Cys-868–Cys-1002, Cys-890–Cys-1037, Cys-899–Cys-999, and Cys-917–Cys-924. N-linked (GlcNAc...) asparagine glycosylation is found at Asn-975 and Asn-1179. 8 disordered regions span residues 1202-1455, 1471-1626, 1642-1834, 1868-1983, 2033-2077, 2090-2196, 2233-2278, and 2323-2348; these read PQPP…TSLV, ATSA…LVTP, SASI…HPHT, SIHS…STGP, ATSA…THSS, SSSW…SASP, VSPT…SLTT, and LTAH…SPGV. The span at 1224–1265 shows a compositional bias: low complexity; it reads TGTSTTIGLLSSTGPSPSSNHTPASPTQTPLLPATLTSSKPT. The segment covering 1276–1286 has biased composition (polar residues); sequence TAVTPQATSGL. The span at 1294-1339 shows a compositional bias: low complexity; sequence STATKPTVTQATTRATASTASPATTSTAQSTTRTTMTLPTPATSGT. Over residues 1340-1351 the composition is skewed to polar residues; sequence SPTLPKSTNQEL. Low complexity-rich tracts occupy residues 1352–1373 and 1381–1415; these read PGTT…TGPT and TRPT…AGSP. Polar residues-rich tracts occupy residues 1416–1455, 1471–1481, and 1490–1520; these read VPST…TSLV, ATSASNHSAPT, and LKAT…STNK. Composition is skewed to low complexity over residues 1521–1567 and 1574–1611; these read TPTS…ATSS and TTHS…PQTT. A 1; truncated repeat occupies 1561–1738; sequence TNSATSSRPP…TTSGTSQSRS (178 aa). The approximate repeats stretch occupies residues 1607–1953; that stretch reads HPQTTLPTHV…STGTRTPVAH (347 aa). The segment covering 1659 to 1686 has biased composition (polar residues); sequence LKATGSTHTAPTMTLTTSGTSQALSSLN. A compositionally biased stretch (low complexity) spans 1687 to 1768; sequence TAKTSTSLHS…PEVTSTSTTS (82 aa). Residues 1769–1793 are compositionally biased toward polar residues; sequence ITPNHTSTGTRTPVAHTTSATSSRL. Repeat unit 2 spans residues 1785–1953; that stretch reads TTSATSSRLP…STGTRTPVAH (169 aa). Low complexity-rich tracts occupy residues 1794-1834 and 1891-1917; these read PTPF…HPHT and TAPP…TSTS. A compositionally biased stretch (polar residues) spans 1918-1962; it reads LPYHTSSTHHPEVTPTSTTNITPKHTSTGTRTPVAHTTSASSSRL. Positions 1963 to 1983 are enriched in low complexity; the sequence is PTPFTTHSPPTGSSPFSSTGP. Polar residues predominate over residues 2052–2070; sequence LKATGSTHTAPPMTVTTSG. Residues 2090–2102 are compositionally biased toward low complexity; sequence SSSWLPQNSSSRP. Residues 2107 to 2120 show a composition bias toward polar residues; the sequence is ITTQLPHLSSATTP. The segment covering 2121 to 2196 has biased composition (low complexity); the sequence is VSTTNQLSSS…PTTASVSASP (76 aa). Positions 2240 to 2264 are enriched in polar residues; the sequence is HLASSTIAFPSTPRTTASTHTAPAF. Over residues 2265 to 2278 the composition is skewed to low complexity; that stretch reads SSQSTTSRSTSLTT. A compositionally biased stretch (polar residues) spans 2323–2347; that stretch reads LTAHGSTPASAPVSSLGTPTPTSPG. Cystine bridges form between Cys-2349–Cys-2396, Cys-2363–Cys-2410, Cys-2372–Cys-2430, and Cys-2376–Cys-2432. The 90-residue stretch at 2349–2438 folds into the CTCK domain; it reads CSVREQQEEI…HCVCSSVACG (90 aa).

As to quaternary structure, multimer; disulfide-linked. In terms of processing, O-glycosylated. Expressed in the regenerative zone of gastric antrum, gastric body mucosa and gastric incisura mucosa. Expressed in the deeper mucous glands of gastric antrum. Overexpressed in Helicobacter pylori infected gastric epithelium. Highly expressed in duodenal Brunner's glands, gall bladder, seminal vesicle, pancreatic centroacinar cells and ducts, and periductal glands of the common bile duct.

It localises to the secreted. May provide a mechanism for modulation of the composition of the protective mucus layer related to acid secretion or the presence of bacteria and noxious agents in the lumen. Plays an important role in the cytoprotection of epithelial surfaces and are used as tumor markers in a variety of cancers. May play a role in epithelial organogenesis. The protein is Mucin-6 (MUC6) of Homo sapiens (Human).